A 340-amino-acid polypeptide reads, in one-letter code: Putative phosphatidylcholine:ceramide cholinephosphotransferase 3 (340 aa).

Positions 1–25 (MGSVSKTVISARGASPDDEQNGTKN) are disordered. The next 4 membrane-spanning stretches (helical) occupy residues 36 to 56 (CIFLFFFLFIAGMSNWAVLAY), 81 to 101 (SSLGDFCVALCIVMLGALLVI), 178 to 198 (LLFSGHTLVMVTCSLAVAYYL), and 202 to 222 (IKPLQWVSHVACLIGMICMTI). The active site involves His-183. At 223–340 (SRTHYTIDVV…SSSSTYPLPC (118 aa)) the chain is on the cytoplasmic side. Residues His-226 and Asp-230 contribute to the active site. The segment at 294–313 (STPRGQERGGASAESSDSSV) is disordered.

The protein belongs to the sphingomyelin synthase family.

The protein resides in the membrane. It carries out the reaction an N-acyl-sphingoid base + a 1,2-diacyl-sn-glycero-3-phosphocholine = an N-(acyl)-sphingosylphosphocholine + a 1,2-diacyl-sn-glycerol. The enzyme catalyses an N-acylsphing-4-enine + a 1,2-diacyl-sn-glycero-3-phosphocholine = a sphingomyelin + a 1,2-diacyl-sn-glycerol. It catalyses the reaction an N-acyl-15-methylhexadecasphing-4-enine + a 1,2-diacyl-sn-glycero-3-phosphocholine = an N-acyl-15-methylhexadecasphing-4-enine-1-phosphocholine + a 1,2-diacyl-sn-glycerol. The protein operates within lipid metabolism; sphingolipid metabolism. Functionally, bidirectional lipid cholinephosphotransferase capable of converting phosphatidylcholine (PC) and ceramide to sphingomyelin (SM) and diacylglycerol (DAG) and vice versa. Direction is dependent on the relative concentrations of DAG and ceramide as phosphocholine acceptors. Directly and specifically recognizes the choline head group on the substrate. Also requires two fatty chains on the choline-P donor molecule in order to be recognized efficiently as a substrate. Does not function strictly as a SM synthase. C.elegans contains specific sphingoid bases, which are unique or different in structure compared to the sphingoid bases found in other animals. Two examples of these distinctive compounds are: 15-methylhexadecasphinganine and 15-methylhexadecasphing-4-enine. The polypeptide is Putative phosphatidylcholine:ceramide cholinephosphotransferase 3 (sms-3) (Caenorhabditis elegans).